We begin with the raw amino-acid sequence, 289 residues long: ADP-dependent (S)-NAD(P)H-hydrate dehydratase (289 aa).

In terms of domain architecture, YjeF C-terminal spans 9 to 286 (VTAAALRAQP…PEVPGILDRL (278 aa)). 2 residues coordinate (6S)-NADPHX: Ala44 and His160. Residues 197 to 201 (KGADS) and Gly226 each bind AMP. Asp227 lines the (6S)-NADPHX pocket.

This sequence belongs to the NnrD/CARKD family. As to quaternary structure, homotetramer. It depends on Mg(2+) as a cofactor.

The catalysed reaction is (6S)-NADHX + ADP = AMP + phosphate + NADH + H(+). The enzyme catalyses (6S)-NADPHX + ADP = AMP + phosphate + NADPH + H(+). Functionally, catalyzes the dehydration of the S-form of NAD(P)HX at the expense of ADP, which is converted to AMP. Together with NAD(P)HX epimerase, which catalyzes the epimerization of the S- and R-forms, the enzyme allows the repair of both epimers of NAD(P)HX, a damaged form of NAD(P)H that is a result of enzymatic or heat-dependent hydration. The sequence is that of ADP-dependent (S)-NAD(P)H-hydrate dehydratase from Xanthomonas campestris pv. campestris (strain ATCC 33913 / DSM 3586 / NCPPB 528 / LMG 568 / P 25).